Consider the following 125-residue polypeptide: Large ribosomal subunit protein bL17 (125 aa).

This sequence belongs to the bacterial ribosomal protein bL17 family. In terms of assembly, part of the 50S ribosomal subunit. Contacts protein L32.

The sequence is that of Large ribosomal subunit protein bL17 from Blochmanniella floridana.